The sequence spans 145 residues: Anaerobic nitrite reductase NSHB5 (145 aa).

One can recognise a Globin domain in the interval 2-142 (GFSETQEELV…LAAAIKEEMK (141 aa)). The short motif at 35 to 39 (EIAPA) is the Homodimerization element. Residues Ser45, His59, Lys61, Arg84, Thr88, and His89 each contribute to the heme b site. The short motif at 96–108 (DAYFEVVKTALLD) is the Homodimerization element.

It belongs to the plant globin family. In terms of assembly, homodimer. The cofactor is heme b. As to expression, expressed in embryonic (embryos, coleoptiles and seminal roots) and vegetative (leaves and roots) organs.

The protein localises to the cytoplasm. It is found in the nucleus. It carries out the reaction Fe(III)-heme b-[protein] + nitric oxide + H2O = Fe(II)-heme b-[protein] + nitrite + 2 H(+). Phytoglobin that reduces nitrite to nitric oxide under anoxic conditions (e.g. during flooding or in waterlogged soil). May not function as an oxygen storage or transport protein. Has an unusually high affinity for O(2) through an hexacoordinate heme iron because of a very low dissociation constant. This is Anaerobic nitrite reductase NSHB5 from Oryza sativa subsp. japonica (Rice).